We begin with the raw amino-acid sequence, 244 residues long: Capsid protein (244 aa).

The Bipartite nuclear localization signal signature appears at 1-24 (MSTSKRKRGDDANWSKRVTKKKPS). A disordered region spans residues 1–39 (MSTSKRKRGDDANWSKRVTKKKPSSAGLKRAGSKADRPS).

This sequence belongs to the geminiviridae capsid protein family. Homomultimer. Interacts with the movement protein. Binds to single-stranded and double-stranded viral DNA.

It localises to the virion. The protein resides in the host nucleus. Its function is as follows. Encapsidates the viral genome into characteristic twinned ('geminate') particles. Binds the genomic viral ssDNA and shuttles it into and out of the cell nucleus. Plays a role in protection of the genome from degradation, virus acquisition and transmission by insect vectors, infectivity, and systemic movement. The CP of monopartite geminiviruses is absolutely essential for virus movement. The sequence is that of Capsid protein from Maize streak virus genotype A (isolate Kenya) (MSV).